The following is a 1076-amino-acid chain: Isoleucine--tRNA ligase (1076 aa).

The 'HIGH' region signature appears at 47 to 57 (PYTTGQIHLGT). A 'KMSKS' region motif is present at residues 591–595 (KMSKS). Position 594 (K594) interacts with ATP.

It belongs to the class-I aminoacyl-tRNA synthetase family. IleS type 2 subfamily. As to quaternary structure, monomer. Requires Zn(2+) as cofactor.

The protein localises to the cytoplasm. It carries out the reaction tRNA(Ile) + L-isoleucine + ATP = L-isoleucyl-tRNA(Ile) + AMP + diphosphate. Catalyzes the attachment of isoleucine to tRNA(Ile). As IleRS can inadvertently accommodate and process structurally similar amino acids such as valine, to avoid such errors it has two additional distinct tRNA(Ile)-dependent editing activities. One activity is designated as 'pretransfer' editing and involves the hydrolysis of activated Val-AMP. The other activity is designated 'posttransfer' editing and involves deacylation of mischarged Val-tRNA(Ile). This is Isoleucine--tRNA ligase from Methanoregula boonei (strain DSM 21154 / JCM 14090 / 6A8).